The chain runs to 1409 residues: L-2-aminoadipate reductase large subunit (1409 aa).

The region spanning 858–937 (QALSETEQTL…GFASEIDRLL (80 aa)) is the Carrier domain. The residue at position 896 (serine 896) is an O-(pantetheine 4'-phosphoryl)serine.

The protein belongs to the ATP-dependent AMP-binding enzyme family. In terms of assembly, heterodimer of an alpha and a beta subunit. Pantetheine 4'-phosphate is required as a cofactor.

It carries out the reaction (S)-2-amino-6-oxohexanoate + NADP(+) + H2O = L-2-aminoadipate + NADPH + 2 H(+). It catalyses the reaction (S)-2-amino-6-oxohexanoate + NAD(+) + H2O = L-2-aminoadipate + NADH + 2 H(+). The enzyme catalyses (S)-2-amino-6-oxohexanoate + AMP + diphosphate + NADP(+) = L-2-aminoadipate + ATP + NADPH + H(+). The protein operates within amino-acid biosynthesis; L-lysine biosynthesis via AAA pathway; L-lysine from L-alpha-aminoadipate (fungal route): step 1/3. In terms of biological role, catalyzes the activation of alpha-aminoadipate by ATP-dependent adenylation and the reduction of activated alpha-aminoadipate by NADPH. The activated alpha-aminoadipate is bound to the phosphopantheinyl group of the enzyme itself before it is reduced to (S)-2-amino-6-oxohexanoate. The protein is L-2-aminoadipate reductase large subunit (lys2) of Penicillium chrysogenum (Penicillium notatum).